The following is a 126-amino-acid chain: Small ribosomal subunit protein eS8 (126 aa).

The span at 1–10 shows a compositional bias: polar residues; it reads MAIWQGSSLR. Positions 1 to 35 are disordered; that stretch reads MAIWQGSSLRKPSGARSRRNKNKRNAEFGRNPAET.

Belongs to the eukaryotic ribosomal protein eS8 family. Part of the 30S ribosomal subunit.

The polypeptide is Small ribosomal subunit protein eS8 (Methanosphaera stadtmanae (strain ATCC 43021 / DSM 3091 / JCM 11832 / MCB-3)).